Here is a 72-residue protein sequence, read N- to C-terminus: Translation initiation factor IF-1 (72 aa).

An S1-like domain is found at M1–K72.

The protein belongs to the IF-1 family. Component of the 30S ribosomal translation pre-initiation complex which assembles on the 30S ribosome in the order IF-2 and IF-3, IF-1 and N-formylmethionyl-tRNA(fMet); mRNA recruitment can occur at any time during PIC assembly.

The protein resides in the cytoplasm. Functionally, one of the essential components for the initiation of protein synthesis. Stabilizes the binding of IF-2 and IF-3 on the 30S subunit to which N-formylmethionyl-tRNA(fMet) subsequently binds. Helps modulate mRNA selection, yielding the 30S pre-initiation complex (PIC). Upon addition of the 50S ribosomal subunit IF-1, IF-2 and IF-3 are released leaving the mature 70S translation initiation complex. The polypeptide is Translation initiation factor IF-1 (Myxococcus xanthus (strain DK1622)).